The chain runs to 100 residues: MIFGYINKLSILNVNPFSKASQSAKLLLAVASKETSNSLYGLNLITSLASKDTNSKPSVEVVYKDGKKLTVDPTKMNIGRLTELIDDYSKTLKFKEMMQK.

It belongs to the mitochondrion-specific ribosomal protein mL53 family. In terms of assembly, component of the mitochondrial large ribosomal subunit (mt-LSU). Mature yeast 74S mitochondrial ribosomes consist of a small (37S) and a large (54S) subunit. The 37S small subunit contains a 15S ribosomal RNA (15S mt-rRNA) and at least 32 different proteins. The 54S large subunit contains a 21S rRNA (21S mt-rRNA) and at least 45 different proteins.

The protein resides in the mitochondrion. Component of the mitochondrial ribosome (mitoribosome), a dedicated translation machinery responsible for the synthesis of mitochondrial genome-encoded proteins, including at least some of the essential transmembrane subunits of the mitochondrial respiratory chain. The mitoribosomes are attached to the mitochondrial inner membrane and translation products are cotranslationally integrated into the membrane. This Schizosaccharomyces pombe (strain 972 / ATCC 24843) (Fission yeast) protein is Large ribosomal subunit protein mL53 (mrpl44).